We begin with the raw amino-acid sequence, 410 residues long: Mating-type locus allele B3 protein (410 aa).

Positions 1–110 (MSRDPKLSLS…ANVVSPGEGC (110 aa)) are variable domain between B alleles. The homeobox; TALE-type DNA-binding region spans 107-184 (GEGCRNLSED…NARRRSGWSH (78 aa)). Residues 111–410 (RNLSEDLPAY…PFLCLSVAFV (300 aa)) form a highly conserved between B alleles region. Disordered stretches follow at residues 203–224 (AKLSSSNQSTPPSLTSEKPSDD) and 278–335 (TPKP…TPEL). Polar residues predominate over residues 205-219 (LSSSNQSTPPSLTSE). Positions 276–308 (KKTPKPGMPRPVTTVAKRHPARKTKPAAKPKSR) match the Nuclear localization signal motif. Residues 291–307 (AKRHPARKTKPAAKPKS) show a composition bias toward basic residues. The segment covering 312–335 (PRASTTPSIDSTLDSSKLESTPEL) has biased composition (polar residues). The tract at residues 333–410 (PELSMCSTAD…PFLCLSVAFV (78 aa)) is not essential for B3 function.

Belongs to the TALE/M-ATYP homeobox family.

It localises to the nucleus. The B locus has at least 25 alleles, and any combination of two different B alleles yields a multimeric regulatory protein, that activates genes responsible for the pathogenicity and for the sexual development of the fungus within the corn plant. This is Mating-type locus allele B3 protein from Mycosarcoma maydis (Corn smut fungus).